The sequence spans 62 residues: DNA gyrase inhibitor YacG (62 aa).

Residues Cys-9, Cys-12, Cys-27, and Cys-31 each contribute to the Zn(2+) site. Residues 43-52 (GYRIPGEKAP) are compositionally biased toward basic and acidic residues. The segment at 43–62 (GYRIPGEKAPESGGEEPGDE) is disordered.

It belongs to the DNA gyrase inhibitor YacG family. As to quaternary structure, interacts with GyrB. Zn(2+) serves as cofactor.

In terms of biological role, inhibits all the catalytic activities of DNA gyrase by preventing its interaction with DNA. Acts by binding directly to the C-terminal domain of GyrB, which probably disrupts DNA binding by the gyrase. In Geobacter sp. (strain M21), this protein is DNA gyrase inhibitor YacG.